Reading from the N-terminus, the 184-residue chain is Peptidyl-tRNA hydrolase (184 aa).

Y17 contacts tRNA. H22 functions as the Proton acceptor in the catalytic mechanism. TRNA-binding residues include F71, N73, and N119.

The protein belongs to the PTH family. As to quaternary structure, monomer.

It localises to the cytoplasm. The catalysed reaction is an N-acyl-L-alpha-aminoacyl-tRNA + H2O = an N-acyl-L-amino acid + a tRNA + H(+). In terms of biological role, hydrolyzes ribosome-free peptidyl-tRNAs (with 1 or more amino acids incorporated), which drop off the ribosome during protein synthesis, or as a result of ribosome stalling. Its function is as follows. Catalyzes the release of premature peptidyl moieties from peptidyl-tRNA molecules trapped in stalled 50S ribosomal subunits, and thus maintains levels of free tRNAs and 50S ribosomes. This is Peptidyl-tRNA hydrolase from Corynebacterium diphtheriae (strain ATCC 700971 / NCTC 13129 / Biotype gravis).